The chain runs to 353 residues: Protein RecA (353 aa).

Residue 67 to 74 participates in ATP binding; the sequence is GPESSGKT. The segment at 330-353 is disordered; sequence SNPNSTPDFSVDDSEGVAETNEDF. Acidic residues predominate over residues 339-353; the sequence is SVDDSEGVAETNEDF.

The protein belongs to the RecA family.

It is found in the cytoplasm. Functionally, can catalyze the hydrolysis of ATP in the presence of single-stranded DNA, the ATP-dependent uptake of single-stranded DNA by duplex DNA, and the ATP-dependent hybridization of homologous single-stranded DNAs. It interacts with LexA causing its activation and leading to its autocatalytic cleavage. The protein is Protein RecA of Escherichia coli O157:H7 (strain EC4115 / EHEC).